The sequence spans 203 residues: Probable GTP-binding protein EngB (203 aa).

In terms of domain architecture, EngB-type G spans aspartate 24 to leucine 199. Residues glycine 32–serine 39, glycine 59–glutamine 63, aspartate 77–glycine 80, threonine 144–aspartate 147, and phenylalanine 178–serine 180 contribute to the GTP site. Mg(2+) contacts are provided by serine 39 and threonine 61.

The protein belongs to the TRAFAC class TrmE-Era-EngA-EngB-Septin-like GTPase superfamily. EngB GTPase family. Mg(2+) is required as a cofactor.

In terms of biological role, necessary for normal cell division and for the maintenance of normal septation. The sequence is that of Probable GTP-binding protein EngB from Xylella fastidiosa (strain 9a5c).